A 348-amino-acid chain; its full sequence is Nicotinate-nucleotide--dimethylbenzimidazole phosphoribosyltransferase (348 aa).

Catalysis depends on E315, which acts as the Proton acceptor.

This sequence belongs to the CobT family.

The catalysed reaction is 5,6-dimethylbenzimidazole + nicotinate beta-D-ribonucleotide = alpha-ribazole 5'-phosphate + nicotinate + H(+). The protein operates within nucleoside biosynthesis; alpha-ribazole biosynthesis; alpha-ribazole from 5,6-dimethylbenzimidazole: step 1/2. Functionally, catalyzes the synthesis of alpha-ribazole-5'-phosphate from nicotinate mononucleotide (NAMN) and 5,6-dimethylbenzimidazole (DMB). The sequence is that of Nicotinate-nucleotide--dimethylbenzimidazole phosphoribosyltransferase from Dechloromonas aromatica (strain RCB).